The primary structure comprises 745 residues: Exocyst complex component 3 (745 aa).

Lys-28 carries the post-translational modification N6-acetyllysine.

It belongs to the SEC6 family. The exocyst complex is composed of EXOC1, EXOC2, EXOC3, EXOC4, EXOC5, EXOC6, EXOC7 and EXOC8. Interacts with EXOC3L1. Interacts with BIRC6/bruce. Interacts with MYRIP. Interacts with SLC6A9. Expressed in epididymis (at protein level).

It localises to the cytoplasm. The protein resides in the perinuclear region. It is found in the cell projection. Its subcellular location is the growth cone. The protein localises to the midbody. It localises to the golgi apparatus. The protein resides in the neuron projection. In terms of biological role, component of the exocyst complex involved in the docking of exocytic vesicles with fusion sites on the plasma membrane. The polypeptide is Exocyst complex component 3 (EXOC3) (Homo sapiens (Human)).